The sequence spans 198 residues: Dynein axonemal light chain 1 (198 aa).

4 LRR repeats span residues 49 to 70 (ACKHLALSTNNIEKISSLSGME), 71 to 92 (NLRILSLGRNLIKKIENLDAVA), 94 to 115 (TLEELWISYNQIASLSGIEKLV), and 116 to 137 (NLRVLYMSNNKITNWGEIDKLA). The LRRCT domain occupies 157–195 (KENNATSEYRIEVVKRLPNLKKLDGMPVDVDEREQANVA).

This sequence belongs to the dynein light chain LC1-type family. As to quaternary structure, interacts with OCAD2, a outer arm dynein heavy chain. Interacts with tubulin (previously called p45) located within the A-tubule of the outer doublets in a ATP-independent manner.

The protein resides in the cytoplasm. It localises to the cytoskeleton. The protein localises to the flagellum axoneme. Part of the multisubunit axonemal ATPase complexes that generate the force for flagellar motility and govern beat frequency. Component of the outer arm dynein (ODA). May be involved in a mechanosensory feedback mechanism controlling ODA activity based on external conformational cues by tethering the outer arm dynein heavy chain (ODA2) to the A-tubule of the outer doublet microtubules within the axoneme. This Chlamydomonas reinhardtii (Chlamydomonas smithii) protein is Dynein axonemal light chain 1.